Reading from the N-terminus, the 135-residue chain is Rheacalcin-1 (135 aa).

Intrachain disulfides connect Cys-6–Cys-17, Cys-34–Cys-131, and Cys-106–Cys-123. Residues 13–132 (FRGNCYGYFR…CSERNAFICK (120 aa)) form the C-type lectin domain.

The protein localises to the secreted. It localises to the extracellular space. Its subcellular location is the extracellular matrix. The polypeptide is Rheacalcin-1 (Rhea americana (Greater rhea)).